A 277-amino-acid polypeptide reads, in one-letter code: Bis(5'-nucleosyl)-tetraphosphatase, symmetrical (277 aa).

Belongs to the Ap4A hydrolase family.

The catalysed reaction is P(1),P(4)-bis(5'-adenosyl) tetraphosphate + H2O = 2 ADP + 2 H(+). Hydrolyzes diadenosine 5',5'''-P1,P4-tetraphosphate to yield ADP. The chain is Bis(5'-nucleosyl)-tetraphosphatase, symmetrical from Bordetella bronchiseptica (strain ATCC BAA-588 / NCTC 13252 / RB50) (Alcaligenes bronchisepticus).